Reading from the N-terminus, the 303-residue chain is Hydroxyethylthiazole kinase (303 aa).

Residues 1–15 (MTTASTTPNSDTSNL) show a composition bias toward polar residues. The disordered stretch occupies residues 1–23 (MTTASTTPNSDTSNLHEVAPDDP). Met67 lines the substrate pocket. Residues Arg142 and Ser206 each contribute to the ATP site. Gly233 is a substrate binding site.

This sequence belongs to the Thz kinase family. The cofactor is Mg(2+).

It carries out the reaction 5-(2-hydroxyethyl)-4-methylthiazole + ATP = 4-methyl-5-(2-phosphooxyethyl)-thiazole + ADP + H(+). Its pathway is cofactor biosynthesis; thiamine diphosphate biosynthesis; 4-methyl-5-(2-phosphoethyl)-thiazole from 5-(2-hydroxyethyl)-4-methylthiazole: step 1/1. Its function is as follows. Catalyzes the phosphorylation of the hydroxyl group of 4-methyl-5-beta-hydroxyethylthiazole (THZ). This is Hydroxyethylthiazole kinase from Bifidobacterium animalis subsp. lactis (strain AD011).